A 581-amino-acid chain; its full sequence is UvrABC system protein C (581 aa).

The GIY-YIG domain maps to 15-94; sequence REPGVYLFEQ…IKRHRPPYNV (80 aa). The UVR domain maps to 202–237; the sequence is GVLADPLRREMEAAAQNQEFERAANLRDKLGAVEAL.

The protein belongs to the UvrC family. Interacts with UvrB in an incision complex.

The protein localises to the cytoplasm. In terms of biological role, the UvrABC repair system catalyzes the recognition and processing of DNA lesions. UvrC both incises the 5' and 3' sides of the lesion. The N-terminal half is responsible for the 3' incision and the C-terminal half is responsible for the 5' incision. The polypeptide is UvrABC system protein C (Haloarcula marismortui (strain ATCC 43049 / DSM 3752 / JCM 8966 / VKM B-1809) (Halobacterium marismortui)).